Here is a 225-residue protein sequence, read N- to C-terminus: Insulin-induced gene 2 protein (225 aa).

Over 1–28 (MAEGETESPRPKKCGPYISSVTSQSVNV) the chain is Cytoplasmic. The helical transmembrane segment at 29–51 (VIRGVVLFFIGVFLALVLNLLQI) threads the bilayer. Over 52-70 (QRNVTLFPPDVITSIFSSA) the chain is Lumenal. A helical transmembrane segment spans residues 71–88 (WWVPPCCGTASAVIGLLY). Topologically, residues 89–103 (PCIDRHLGEPHKFKR) are cytoplasmic. A helical membrane pass occupies residues 104–126 (EWSSVMRCVAVFVGINHASAKVD). Residues 127 to 129 (FDN) are Lumenal-facing. Residues 130–148 (NFQFSLTLAALSVGLWWTF) form a helical membrane-spanning segment. Residues 149–153 (DRSRS) lie on the Cytoplasmic side of the membrane. The residue at position 151 (Ser151) is a Phosphoserine. Residues 154 to 175 (GFGLGVGIAFLATVVTQLLVYN) traverse the membrane as a helical segment. Over 176 to 189 (GVYQYTSPDFLYVR) the chain is Lumenal. The chain crosses the membrane as a helical span at residues 190 to 207 (SWLPCIFFAGGITMGNIG). The Cytoplasmic portion of the chain corresponds to 208–225 (RQLAMYECKVIAEKSHQE). The residue at position 215 (Cys215) is a Cysteine sulfenic acid (-SOH); alternate. Cys215 participates in a covalent cross-link: Glycyl cysteine thioester (Cys-Gly) (interchain with G-Cter in ubiquitin); alternate. The short motif at 219-225 (AEKSHQE) is the KxHxx element.

It belongs to the INSIG family. In terms of assembly, interacts with SCAP; interaction is direct and only takes place in the presence of sterols; it prevents interaction between SCAP and the coat protein complex II (COPII). Associates with the SCAP-SREBP complex (composed of SCAP and SREBF1/SREBP1 or SREBF2/SREBP2); association is mediated via its interaction with SCAP and only takes place in the presence of sterols. Interacts with RNF139. Interacts with RNF145. In terms of processing, phosphorylation at Ser-151 by PCK1 reduces binding to oxysterol, disrupting the interaction between INSIG2 and SCAP, thereby promoting nuclear translocation of SREBP proteins (SREBF1/SREBP1 or SREBF2/SREBP2) and subsequent transcription of downstream lipogenesis-related genes. Polyubiquitinated by AMFR/gp78 at Cys-215 in some tissues such as adipose tissues, undifferentiated myoblasts and liver, leading to its degradation. In differentiated myotubes, Cys-215 oxidation prevents ubiquitination at the same site, resulting in protein stabilization. Post-translationally, oxidized at Cys-215 in differentiated myotubes, preventing ubiquitination at the same site, and resulting in protein stabilization. In terms of tissue distribution, expressed in liver, testis, kidney, spleen, intestine, brain and adrenal gland.

It is found in the endoplasmic reticulum membrane. Oxysterol-binding protein that mediates feedback control of cholesterol synthesis by controlling both endoplasmic reticulum to Golgi transport of SCAP and degradation of HMGCR. Acts as a negative regulator of cholesterol biosynthesis by mediating the retention of the SCAP-SREBP complex in the endoplasmic reticulum, thereby blocking the processing of sterol regulatory element-binding proteins (SREBPs) SREBF1/SREBP1 and SREBF2/SREBP2. Binds oxysterol, including 22-hydroxycholesterol, 24-hydroxycholesterol, 25-hydroxycholesterol and 27-hydroxycholesterol, regulating interaction with SCAP and retention of the SCAP-SREBP complex in the endoplasmic reticulum. In presence of oxysterol, interacts with SCAP, retaining the SCAP-SREBP complex in the endoplasmic reticulum, thereby preventing SCAP from escorting SREBF1/SREBP1 and SREBF2/SREBP2 to the Golgi. Sterol deprivation or phosphorylation by PCK1 reduce oxysterol-binding, disrupting the interaction between INSIG2 and SCAP, thereby promoting Golgi transport of the SCAP-SREBP complex, followed by processing and nuclear translocation of SREBF1/SREBP1 and SREBF2/SREBP2. Also regulates cholesterol synthesis by regulating degradation of HMGCR: initiates the sterol-mediated ubiquitin-mediated endoplasmic reticulum-associated degradation (ERAD) of HMGCR via recruitment of the reductase to the ubiquitin ligase RNF139. The chain is Insulin-induced gene 2 protein from Mus musculus (Mouse).